A 74-amino-acid chain; its full sequence is Conotoxin Vc6.11 (74 aa).

A signal peptide spans 1 to 19 (MEKLTILLLVAAVLMSTQA). Positions 20-41 (LIQEQRQKAKINLFSKRKPSAE) are excised as a propeptide. 2 disulfides stabilise this stretch: cysteine 55/cysteine 66 and cysteine 61/cysteine 71.

The protein belongs to the conotoxin O2 superfamily. As to expression, expressed by the venom duct.

The protein resides in the secreted. In terms of biological role, inhibits voltage-gated ion channels. This Conus victoriae (Queen Victoria cone) protein is Conotoxin Vc6.11.